A 331-amino-acid chain; its full sequence is Pseudouridylate synthase TRUB2, mitochondrial (331 aa).

Residues 1-10 (MGSAGLSRLH) constitute a mitochondrion transit peptide. D98 acts as the Nucleophile in catalysis. The tract at residues 296-331 (KSLSPGLDTKQLPSPGWSWDSQGPSSTLGLERGAGQ) is disordered. A compositionally biased stretch (polar residues) spans 314-323 (WDSQGPSSTL).

It belongs to the pseudouridine synthase TruB family. As to quaternary structure, forms a regulatory protein-RNA complex, consisting of RCC1L, NGRN, RPUSD3, RPUSD4, TRUB2, FASTKD2 and 16S mt-rRNA.

It is found in the mitochondrion matrix. The enzyme catalyses a uridine in mRNA = a pseudouridine in mRNA. It carries out the reaction uridine(55) in tRNA = pseudouridine(55) in tRNA. In terms of biological role, minor enzyme contributing to the isomerization of uridine to pseudouridine (pseudouridylation) of specific mitochondrial mRNAs (mt-mRNAs) such as COXI and COXIII mt-mRNAs. As a component of a functional protein-RNA module, consisting of RCC1L, NGRN, RPUSD3, RPUSD4, TRUB2, FASTKD2 and 16S mitochondrial ribosomal RNA (16S mt-rRNA), controls 16S mt-rRNA abundance and is required for intra-mitochondrial translation. Also catalyzes pseudouridylation of some tRNAs, including synthesis of pseudouridine(55) from uracil-55, in the psi GC loop of a subset of tRNAs. The chain is Pseudouridylate synthase TRUB2, mitochondrial from Homo sapiens (Human).